A 396-amino-acid polypeptide reads, in one-letter code: Coiled-coil domain-containing protein 1 (396 aa).

The N-terminal stretch at 1-21 is a signal peptide; sequence MAARSALCFLAIITLFVYACG. Coiled-coil stretches lie at residues 53–73, 109–129, 208–242, and 287–308; these read KIDS…NDRD, EVEK…DIID, DKES…ILDT, and YEEI…IDEH. A compositionally biased stretch (acidic residues) spans 231–256; that stretch reads DANDDVNDILDTDDEDEDEDVQEEKD. Disordered regions lie at residues 231–260 and 288–378; these read DAND…EDIH and EEIE…VADD.

In terms of tissue distribution, component of the acid-insoluble and acid-soluble organic matrix of calcified layers of the shell (at protein level).

The protein resides in the secreted. This Lottia gigantea (Giant owl limpet) protein is Coiled-coil domain-containing protein 1.